Here is a 469-residue protein sequence, read N- to C-terminus: uncharacterized protein (469 aa).

Residues 152 to 161 are compositionally biased toward basic and acidic residues; that stretch reads VREGKEEKKG. The tract at residues 152-174 is disordered; the sequence is VREGKEEKKGGPPGRGPPGWRRR. Coiled-coil stretches lie at residues 346–375 and 423–453; these read KAALEQNDRLRSELEMEVALLQSAKERSES and SDITENRIKSIEHEAIQLETENMILKKKIKG.

This is an uncharacterized protein from Homo sapiens (Human).